Reading from the N-terminus, the 341-residue chain is Glycerol-3-phosphate dehydrogenase [NAD(P)+] 1 (341 aa).

4 residues coordinate NADPH: S17, W18, R37, and K112. Sn-glycerol 3-phosphate contacts are provided by K112 and G140. An NADPH-binding site is contributed by A144. Sn-glycerol 3-phosphate contacts are provided by K195, D248, S258, R259, and N260. Catalysis depends on K195, which acts as the Proton acceptor. R259 contributes to the NADPH binding site. NADPH-binding residues include V283 and E285.

The protein belongs to the NAD-dependent glycerol-3-phosphate dehydrogenase family.

The protein resides in the cytoplasm. It catalyses the reaction sn-glycerol 3-phosphate + NAD(+) = dihydroxyacetone phosphate + NADH + H(+). It carries out the reaction sn-glycerol 3-phosphate + NADP(+) = dihydroxyacetone phosphate + NADPH + H(+). It participates in membrane lipid metabolism; glycerophospholipid metabolism. In terms of biological role, catalyzes the reduction of the glycolytic intermediate dihydroxyacetone phosphate (DHAP) to sn-glycerol 3-phosphate (G3P), the key precursor for phospholipid synthesis. This is Glycerol-3-phosphate dehydrogenase [NAD(P)+] 1 from Mycobacterium bovis (strain ATCC BAA-935 / AF2122/97).